A 519-amino-acid chain; its full sequence is T-complex protein 11-like protein 2 (519 aa).

Residues 1–57 are disordered; that stretch reads MPFNGEKQCVSEDQPSDSDSSRFSESMASLSDYECSRQSFTSDSSSKSSSPASTSPP. The residue at position 16 (serine 16) is a Phosphoserine. Composition is skewed to low complexity over residues 17 to 29 and 36 to 55; these read DSDSSRFSESMAS and SRQSFTSDSSSKSSSPASTS.

This sequence belongs to the TCP11 family. In terms of assembly, interacts with FMNL2; this interaction promotes muscle-derived satellite cell (MDSC) migration and differentiation.

It localises to the cytoplasm. Its subcellular location is the cytoskeleton. In terms of biological role, promotes the migration of muscle-derived satellite cells (MDSCs) during differentiation throught interaction with FMNL2 and therefore may participate in microfilament assembly. The polypeptide is T-complex protein 11-like protein 2 (Bos taurus (Bovine)).